We begin with the raw amino-acid sequence, 348 residues long: WW domain binding protein 1-like (348 aa).

A helical membrane pass occupies residues 42–62; it reads LWWFWLVWTVVIILSCCCVCH. Disordered stretches follow at residues 111–253 and 306–348; these read VVNR…RRFT and CLSS…GSPS. A compositionally biased stretch (pro residues) spans 134–155; the sequence is LPPPPQGGPPGGSPPGADPPPQ. The span at 156–177 shows a compositional bias: low complexity; that stretch reads GSQGAQSSPLSGPSRSSTRPPS. Ser177 bears the Phosphoserine mark. A compositionally biased stretch (basic and acidic residues) spans 220-234; the sequence is SECKEELLKDSRSER. Polar residues predominate over residues 331–348; that stretch reads NTINEQDSPNSQHSGSPS.

The protein localises to the membrane. The polypeptide is WW domain binding protein 1-like (Wbp1l) (Mus musculus (Mouse)).